The sequence spans 95 residues: LTFSTRSLLNLPAVEWKSGAKYTCTASHSPSQSTVKRVIRNPKESPKGSSETRKSPLEIMESPEDYGTEEDQLENVNEDSNSSLSIMTFVILFIL.

The 36-residue stretch at 1–36 (LTFSTRSLLNLPAVEWKSGAKYTCTASHSPSQSTVK) folds into the Ig-like domain. Residues 24–35 (CTASHSPSQSTV) are compositionally biased toward polar residues. The tract at residues 24–79 (CTASHSPSQSTVKRVIRNPKESPKGSSETRKSPLEIMESPEDYGTEEDQLENVNED) is disordered. Basic and acidic residues predominate over residues 41–56 (NPKESPKGSSETRKSP). A compositionally biased stretch (acidic residues) spans 61–77 (ESPEDYGTEEDQLENVN). A glycan (N-linked (GlcNAc...) asparagine) is linked at N81.

Expressed mainly in lymphoid tissues including spleen, epigonal organ and circulating lymphocytes. Also expressed at low levels in the pancreas.

The protein is IgNAR transmembrane form NE of Ginglymostoma cirratum (Nurse shark).